Reading from the N-terminus, the 87-residue chain is UPF0297 protein Sca_1229 (87 aa).

This sequence belongs to the UPF0297 family.

The chain is UPF0297 protein Sca_1229 from Staphylococcus carnosus (strain TM300).